Here is a 468-residue protein sequence, read N- to C-terminus: Ribulose bisphosphate carboxylase large chain (468 aa).

The residue at position 7 (K7) is an N6,N6,N6-trimethyllysine. Substrate-binding residues include N116 and T166. The Proton acceptor role is filled by K168. K170 contributes to the substrate binding site. The Mg(2+) site is built by K194, D196, and E197. The residue at position 194 (K194) is an N6-carboxylysine. Residue H287 is the Proton acceptor of the active site. Residues R288, H320, and S372 each contribute to the substrate site.

It belongs to the RuBisCO large chain family. Type I subfamily. Heterohexadecamer of 8 large chains and 8 small chains; disulfide-linked. The disulfide link is formed within the large subunit homodimers. Requires Mg(2+) as cofactor. In terms of processing, the disulfide bond which can form in the large chain dimeric partners within the hexadecamer appears to be associated with oxidative stress and protein turnover.

The protein localises to the plastid. It localises to the chloroplast. It catalyses the reaction 2 (2R)-3-phosphoglycerate + 2 H(+) = D-ribulose 1,5-bisphosphate + CO2 + H2O. It carries out the reaction D-ribulose 1,5-bisphosphate + O2 = 2-phosphoglycolate + (2R)-3-phosphoglycerate + 2 H(+). Functionally, ruBisCO catalyzes two reactions: the carboxylation of D-ribulose 1,5-bisphosphate, the primary event in carbon dioxide fixation, as well as the oxidative fragmentation of the pentose substrate in the photorespiration process. Both reactions occur simultaneously and in competition at the same active site. In Cornus alternifolia (Pagoda dogwood), this protein is Ribulose bisphosphate carboxylase large chain.